The following is a 130-amino-acid chain: Ion transport peptide (130 aa).

3 cysteine pairs are disulfide-bonded: cysteine 62–cysteine 98, cysteine 78–cysteine 94, and cysteine 81–cysteine 107. Position 127 is a leucine amide (leucine 127).

It belongs to the arthropod CHH/MIH/GIH/VIH hormone family. In terms of tissue distribution, brain and corpus cardiacum.

Its subcellular location is the secreted. Stimulates salt and water reabsorption and inhibits acid secretion in the ileum of S.gregaria. This chain is Ion transport peptide, found in Schistocerca gregaria (Desert locust).